The chain runs to 136 residues: Putative pre-16S rRNA nuclease (136 aa).

This sequence belongs to the YqgF nuclease family.

It localises to the cytoplasm. Functionally, could be a nuclease involved in processing of the 5'-end of pre-16S rRNA. The chain is Putative pre-16S rRNA nuclease from Francisella tularensis subsp. novicida (strain U112).